The sequence spans 206 residues: Adenylyl-sulfate kinase (206 aa).

Position 31-38 (31-38) interacts with ATP; sequence GLSASGKS. Ser-105 functions as the Phosphoserine intermediate in the catalytic mechanism.

This sequence belongs to the APS kinase family.

The enzyme catalyses adenosine 5'-phosphosulfate + ATP = 3'-phosphoadenylyl sulfate + ADP + H(+). Its pathway is sulfur metabolism; hydrogen sulfide biosynthesis; sulfite from sulfate: step 2/3. Catalyzes the synthesis of activated sulfate. This chain is Adenylyl-sulfate kinase (sD), found in Emericella nidulans (strain FGSC A4 / ATCC 38163 / CBS 112.46 / NRRL 194 / M139) (Aspergillus nidulans).